The sequence spans 141 residues: Nucleoside triphosphatase NudI (141 aa).

A Nudix hydrolase domain is found at 1–141 (MRQRTIVCPL…RKTLRLKGLL (141 aa)). Positions 38–59 (GGVEPGERIEEALRREIREELG) match the Nudix box motif.

The protein belongs to the Nudix hydrolase family. NudI subfamily. In terms of assembly, monomer. Mg(2+) serves as cofactor.

The catalysed reaction is a ribonucleoside 5'-triphosphate + H2O = a ribonucleoside 5'-phosphate + diphosphate + H(+). The enzyme catalyses a 2'-deoxyribonucleoside 5'-triphosphate + H2O = a 2'-deoxyribonucleoside 5'-phosphate + diphosphate + H(+). It catalyses the reaction dUTP + H2O = dUMP + diphosphate + H(+). It carries out the reaction dTTP + H2O = dTMP + diphosphate + H(+). The catalysed reaction is dCTP + H2O = dCMP + diphosphate + H(+). Its function is as follows. Catalyzes the hydrolysis of nucleoside triphosphates, with a preference for pyrimidine deoxynucleoside triphosphates (dUTP, dTTP and dCTP). In Escherichia coli O6:K15:H31 (strain 536 / UPEC), this protein is Nucleoside triphosphatase NudI.